We begin with the raw amino-acid sequence, 360 residues long: DNA primase large subunit PriL (360 aa).

Residues C237, C309, C318, and C325 each coordinate [4Fe-4S] cluster. The disordered stretch occupies residues 340-360 (DDGDDDDLADWRDREDDDSPD).

This sequence belongs to the eukaryotic-type primase large subunit family. As to quaternary structure, heterodimer of a small subunit (PriS) and a large subunit (PriL). It depends on [4Fe-4S] cluster as a cofactor.

Functionally, regulatory subunit of DNA primase, an RNA polymerase that catalyzes the synthesis of short RNA molecules used as primers for DNA polymerase during DNA replication. Stabilizes and modulates the activity of the small subunit, increasing the rate of DNA synthesis, and conferring RNA synthesis capability. The DNA polymerase activity may enable DNA primase to also catalyze primer extension after primer synthesis. May also play a role in DNA repair. The sequence is that of DNA primase large subunit PriL from Halobacterium salinarum (strain ATCC 29341 / DSM 671 / R1).